The following is a 207-amino-acid chain: Thymidylate kinase (207 aa).

Residues 11 to 49 are disordered; that stretch reads EGIDGSGKSTQARRLAEHLRDTGRDPLLTREPGGSPGAE. Residue 12–19 coordinates ATP; that stretch reads GIDGSGKS. Residues 24-38 show a composition bias toward basic and acidic residues; the sequence is RLAEHLRDTGRDPLL.

It belongs to the thymidylate kinase family.

It carries out the reaction dTMP + ATP = dTDP + ADP. Its function is as follows. Phosphorylation of dTMP to form dTDP in both de novo and salvage pathways of dTTP synthesis. The sequence is that of Thymidylate kinase from Dinoroseobacter shibae (strain DSM 16493 / NCIMB 14021 / DFL 12).